Consider the following 152-residue polypeptide: Nucleoside diphosphate kinase (152 aa).

ATP-binding residues include K11, F59, R87, T93, R104, and N114. The Pros-phosphohistidine intermediate role is filled by H117.

The protein belongs to the NDK family. In terms of assembly, homotetramer. The cofactor is Mg(2+).

Its subcellular location is the cytoplasm. It catalyses the reaction a 2'-deoxyribonucleoside 5'-diphosphate + ATP = a 2'-deoxyribonucleoside 5'-triphosphate + ADP. The catalysed reaction is a ribonucleoside 5'-diphosphate + ATP = a ribonucleoside 5'-triphosphate + ADP. Major role in the synthesis of nucleoside triphosphates other than ATP. The ATP gamma phosphate is transferred to the NDP beta phosphate via a ping-pong mechanism, using a phosphorylated active-site intermediate. The polypeptide is Nucleoside diphosphate kinase (Prochlorococcus marinus (strain AS9601)).